We begin with the raw amino-acid sequence, 350 residues long: Atypical chemokine receptor 4 (350 aa).

At 1-41 (MAVEYNQSTDYYYEENEMNDTHDYSQYEVICIKEEVRKFAK) the chain is on the extracellular side. N-linked (GlcNAc...) asparagine glycosylation is found at N6 and N19. A helical transmembrane segment spans residues 42–66 (VFLPAFFTIAFIIGLAGNSTVVAIY). Topologically, residues 67-79 (AYYKKRRTKTDVY) are cytoplasmic. The helical transmembrane segment at 80-99 (ILNLAVADLFLLFTLPFWAV) threads the bilayer. Topologically, residues 100 to 113 (NAVHGWVLGKIMCK) are extracellular. A disulfide bridge connects residues C112 and C184. A helical transmembrane segment spans residues 114–135 (VTSALYTVNFVSGMQFLACIST). Topologically, residues 136–153 (DRYWAVTKAPSQSGVGKP) are cytoplasmic. Residues 154-175 (CWVICFCVWVAAILLSIPQLVF) form a helical membrane-spanning segment. Over 176–199 (YTVNHKARCVPIFPYHLGTSMKAS) the chain is Extracellular. The chain crosses the membrane as a helical span at residues 200 to 222 (IQILEICIGFIIPFLIMAVCYFI). Topologically, residues 223-241 (TAKTLIKMPNIKKSQPLKV) are cytoplasmic. The helical transmembrane segment at 242 to 265 (LFTVVIVFIVTQLPYNIVKFCQAI) threads the bilayer. The Extracellular segment spans residues 266 to 283 (DIIYSLITDCDMSKRMDV). A helical membrane pass occupies residues 284–306 (AIQITESIALFHSCLNPVLYVFM). Topologically, residues 307–350 (GTSFKNYIMKVAKKYGSWRRQRQNVEEIPFESEDATEPTSTFSI) are cytoplasmic.

Belongs to the G-protein coupled receptor 1 family. Atypical chemokine receptor subfamily. In terms of assembly, forms heteromers with CXCR3. Interacts with ARRB1 and ARRB2. Post-translationally, the Ser/Thr residues in the C-terminal cytoplasmic tail may be phosphorylated. As to expression, expressed in circumvallate and fungiform papillae, olfactory epithelium and lung. Lower expression in liver, kidney and tongue epithelium bearing no taste papillae. Very low expression in the cerebral cortex of the brain.

It localises to the early endosome. It is found in the recycling endosome. The protein localises to the cell membrane. Functionally, atypical chemokine receptor that controls chemokine levels and localization via high-affinity chemokine binding that is uncoupled from classic ligand-driven signal transduction cascades, resulting instead in chemokine sequestration, degradation, or transcytosis. Also known as interceptor (internalizing receptor) or chemokine-scavenging receptor or chemokine decoy receptor. Acts as a receptor for chemokines CCL2, CCL8, CCL13, CCL19, CCL21 and CCL25. Chemokine-binding does not activate G-protein-mediated signal transduction but instead induces beta-arrestin recruitment, leading to ligand internalization. Plays an important role in controlling the migration of immune and cancer cells that express chemokine receptors CCR7 and CCR9, by reducing the availability of CCL19, CCL21, and CCL25 through internalization. Negatively regulates CXCR3-induced chemotaxis. Regulates T-cell development in the thymus. The protein is Atypical chemokine receptor 4 (ACKR4) of Bos taurus (Bovine).